The sequence spans 132 residues: Large ribosomal subunit protein uL14 (132 aa).

The protein belongs to the universal ribosomal protein uL14 family. In terms of assembly, part of the 50S ribosomal subunit. Forms a cluster with proteins L3 and L24e, part of which may contact the 16S rRNA in 2 intersubunit bridges.

Binds to 23S rRNA. Forms part of two intersubunit bridges in the 70S ribosome. The polypeptide is Large ribosomal subunit protein uL14 (Archaeoglobus fulgidus (strain ATCC 49558 / DSM 4304 / JCM 9628 / NBRC 100126 / VC-16)).